Consider the following 104-residue polypeptide: L-rhamnose mutarotase (104 aa).

Position 18 (Y18) interacts with substrate. H22 serves as the catalytic Proton donor. Residues Y41 and 76 to 77 (WW) contribute to the substrate site.

It belongs to the rhamnose mutarotase family. As to quaternary structure, homodimer.

It localises to the cytoplasm. It carries out the reaction alpha-L-rhamnose = beta-L-rhamnose. The protein operates within carbohydrate metabolism; L-rhamnose metabolism. In terms of biological role, involved in the anomeric conversion of L-rhamnose. The polypeptide is L-rhamnose mutarotase (Rhizobium meliloti (strain 1021) (Ensifer meliloti)).